The sequence spans 89 residues: Small ribosomal subunit protein uS15 (89 aa).

It belongs to the universal ribosomal protein uS15 family. As to quaternary structure, part of the 30S ribosomal subunit. Forms a bridge to the 50S subunit in the 70S ribosome, contacting the 23S rRNA.

In terms of biological role, one of the primary rRNA binding proteins, it binds directly to 16S rRNA where it helps nucleate assembly of the platform of the 30S subunit by binding and bridging several RNA helices of the 16S rRNA. Forms an intersubunit bridge (bridge B4) with the 23S rRNA of the 50S subunit in the ribosome. The chain is Small ribosomal subunit protein uS15 from Mannheimia succiniciproducens (strain KCTC 0769BP / MBEL55E).